Reading from the N-terminus, the 233-residue chain is uncharacterized protein (233 aa).

Residues 21–43 (RWRTATSADHPRRGRPAAQAVRR) form a disordered region.

This is an uncharacterized protein from Mycobacterium tuberculosis (strain CDC 1551 / Oshkosh).